We begin with the raw amino-acid sequence, 394 residues long: Elongation factor Tu (394 aa).

One can recognise a tr-type G domain in the interval lysine 10 to valine 204. The tract at residues glycine 19 to threonine 26 is G1. A GTP-binding site is contributed by glycine 19 to threonine 26. Threonine 26 is a binding site for Mg(2+). Residues glycine 60–serine 64 are G2. The interval aspartate 81 to glycine 84 is G3. GTP contacts are provided by residues aspartate 81–histidine 85 and asparagine 136–aspartate 139. Positions asparagine 136–aspartate 139 are G4. The tract at residues serine 174–leucine 176 is G5.

This sequence belongs to the TRAFAC class translation factor GTPase superfamily. Classic translation factor GTPase family. EF-Tu/EF-1A subfamily. In terms of assembly, monomer.

It is found in the cytoplasm. It carries out the reaction GTP + H2O = GDP + phosphate + H(+). In terms of biological role, GTP hydrolase that promotes the GTP-dependent binding of aminoacyl-tRNA to the A-site of ribosomes during protein biosynthesis. This is Elongation factor Tu from Rickettsia felis (strain ATCC VR-1525 / URRWXCal2) (Rickettsia azadi).